The sequence spans 386 residues: FHA domain-containing protein At4g14490 (386 aa).

The region spanning 28-78 is the FHA domain; it reads IRVGRIVRGNEIAIKDAGISTKHLRIESDSGNWVIQDLGSSNGTLLNSNAL. Positions 286–311 are disordered; it reads KNKGKNKKADQKPLKSFENDEVTDSG. The span at 292 to 303 shows a compositional bias: basic and acidic residues; the sequence is KKADQKPLKSFE.

The chain is FHA domain-containing protein At4g14490 from Arabidopsis thaliana (Mouse-ear cress).